The chain runs to 549 residues: Efflux pump patC (549 aa).

Over residues 1–12 (MAESTAHTSPSL) the composition is skewed to polar residues. The interval 1–40 (MAESTAHTSPSLNDKEREVDQGILSDESGPAEEVKETPDQ) is disordered. 14 helical membrane passes run 50-70 (LLIC…NTIV), 85-105 (AQLG…ILPL), 116-136 (WLFI…GGAP), 146-166 (VWAG…ITIL), 178-198 (LVGL…GAFA), 206-226 (WGFY…VFLL), 252-272 (VLSA…GVMW), 282-302 (LYVV…FCVL), 321-341 (IALY…VYYI), 360-380 (LLPF…LMPK), 385-405 (VLWY…MYTV), 419-439 (ILLG…PSLV), 460-482 (LLGL…NALL), and 526-546 (VYVM…FLPW).

The protein belongs to the major facilitator superfamily. TCR/Tet family.

Its subcellular location is the vacuole membrane. The protein resides in the cell membrane. Efflux pump; part of the gene cluster that mediates the biosynthesis of patulin, an acetate-derived tetraketide mycotoxin produced by several fungal species that shows antimicrobial properties against several bacteria. May be involved in the secretion of E-ascladiol to be converted to patulin by the secreted patulin synthase patE. The polypeptide is Efflux pump patC (Aspergillus clavatus (strain ATCC 1007 / CBS 513.65 / DSM 816 / NCTC 3887 / NRRL 1 / QM 1276 / 107)).